The chain runs to 177 residues: Peptide methionine sulfoxide reductase MsrA (177 aa).

C11 is a catalytic residue.

The protein belongs to the MsrA Met sulfoxide reductase family.

The catalysed reaction is L-methionyl-[protein] + [thioredoxin]-disulfide + H2O = L-methionyl-(S)-S-oxide-[protein] + [thioredoxin]-dithiol. It carries out the reaction [thioredoxin]-disulfide + L-methionine + H2O = L-methionine (S)-S-oxide + [thioredoxin]-dithiol. Has an important function as a repair enzyme for proteins that have been inactivated by oxidation. Catalyzes the reversible oxidation-reduction of methionine sulfoxide in proteins to methionine. This chain is Peptide methionine sulfoxide reductase MsrA, found in Picrophilus torridus (strain ATCC 700027 / DSM 9790 / JCM 10055 / NBRC 100828 / KAW 2/3).